We begin with the raw amino-acid sequence, 521 residues long: Putative FNIP repeat-containing protein L162 (521 aa).

FNIP repeat units lie at residues 179-221 (FNKS…LGYK) and 222-263 (YNYP…MGGR).

The chain is Putative FNIP repeat-containing protein L162 from Acanthamoeba polyphaga mimivirus (APMV).